The following is a 256-amino-acid chain: Pimeloyl-[acyl-carrier protein] methyl ester esterase (256 aa).

Residues 15-242 form the AB hydrolase-1 domain; the sequence is HLVLLHGWGL…AAHAPFISHP (228 aa). Substrate-binding positions include W22, 82–83, and 143–147; these read SL and FLALQ. Catalysis depends on S82, which acts as the Nucleophile. Active-site residues include D207 and H235. H235 provides a ligand contact to substrate.

Belongs to the AB hydrolase superfamily. Carboxylesterase BioH family. In terms of assembly, monomer.

Its subcellular location is the cytoplasm. The catalysed reaction is 6-carboxyhexanoyl-[ACP] methyl ester + H2O = 6-carboxyhexanoyl-[ACP] + methanol + H(+). Its pathway is cofactor biosynthesis; biotin biosynthesis. Functionally, the physiological role of BioH is to remove the methyl group introduced by BioC when the pimeloyl moiety is complete. It allows to synthesize pimeloyl-ACP via the fatty acid synthetic pathway through the hydrolysis of the ester bonds of pimeloyl-ACP esters. In Escherichia coli O6:H1 (strain CFT073 / ATCC 700928 / UPEC), this protein is Pimeloyl-[acyl-carrier protein] methyl ester esterase.